Reading from the N-terminus, the 373-residue chain is C-C chemokine receptor type 2 (373 aa).

The Extracellular segment spans residues 1–55 (MEDNNMLPQFIHGILSTSHSLFTRSIQELDEGATTPYDYDDGEPCHKTSVKQIGA). Residues 56-83 (WILPPLYSLVFIFGFVGNMLVIIILIGC) traverse the membrane as a helical segment. Over 84–93 (KKLKSMTDIY) the chain is Cytoplasmic. A helical transmembrane segment spans residues 94-114 (LLNLAISDLLFLLTLPFWAHY). Residues 115 to 127 (AANEWVFGNIMCK) lie on the Extracellular side of the membrane. Cysteines 126 and 203 form a disulfide. Residues 128-149 (VFTGLYHIGYFGGIFFIILLTI) form a helical membrane-spanning segment. Residues 150-166 (DRYLAIVHAVFALKART) lie on the Cytoplasmic side of the membrane. Phosphotyrosine; by JAK2 is present on Tyr152. Residues 167-191 (VTFGVITSVVTWVVAVFASLPGIIF) traverse the membrane as a helical segment. Over 192–219 (TKSKQDDHHYTCGPYFTQLWKNFQTIMR) the chain is Extracellular. Residues 220-239 (NILSLILPLLVMVICYSGIL) traverse the membrane as a helical segment. The Cytoplasmic portion of the chain corresponds to 240-256 (HTLFRCRNEKKRHRAVR). Residues 257–281 (LIFAIMIVYFLFWTPYNIVLFLTTF) form a helical membrane-spanning segment. The Extracellular segment spans residues 282–298 (QESLGMSNCVIDKHLDQ). A helical membrane pass occupies residues 299-322 (AMQVTETLGMTHCCINPVIYAFVG). Residues 323–373 (EKFRRYLSIFFRKHIAKRLCKQCPVFYRETADRVSSTFTPSTGEQEVSVGL) lie on the Cytoplasmic side of the membrane.

The protein belongs to the G-protein coupled receptor 1 family. As to quaternary structure, interacts with ARRB1. Interacts (via extracellular N-terminal region) with beta-defensin DEFB106A/DEFB106B; this interaction may preferentially require specific tyrosine sulfation on CCR2. Interacts with NUP85; the interaction is required for CCR2 clusters formation on the cell membrane and CCR2 signaling. In terms of processing, N-glycosylated. Post-translationally, sulfation increases the affinity for both monomeric and dimeric CCL2 with stronger binding to the monomeric form. Binding of sulfated CCR2 to CCL2 promotes conversion of CCL2 from dimer to monomer. Epressed in mature thymocytes. Detected in monocyte/macrophage cell lines, but not in nonhematopoietic cell lines.

Its subcellular location is the cell membrane. In terms of biological role, key functional receptor for CCL2 but can also bind CCL7 and CCL12 chemokines. Its binding with CCL2 on monocytes and macrophages mediates chemotaxis and migration induction through the activation of the PI3K cascade, the small G protein Rac and lamellipodium protrusion. Also acts as a receptor for the beta-defensin DEFB106A/DEFB106B. Regulates the expression of T-cell inflammatory cytokines and T-cell differentiation, promoting the differentiation of T-cells into T-helper 17 cells (Th17) during inflammation. Facilitates the export of mature thymocytes by enhancing directional movement of thymocytes to sphingosine-1-phosphate stimulation and up-regulation of S1P1R expression; signals through the JAK-STAT pathway to regulate FOXO1 activity leading to an increased expression of S1P1R. Plays an important role in mediating peripheral nerve injury-induced neuropathic pain. Increases NMDA-mediated synaptic transmission in both dopamine D1 and D2 receptor-containing neurons, which may be caused by MAPK/ERK-dependent phosphorylation of GRIN2B/NMDAR2B. Mediates the recruitment of macrophages and monocytes to the injury site following brain injury. The protein is C-C chemokine receptor type 2 (Ccr2) of Mus musculus (Mouse).